Here is a 183-residue protein sequence, read N- to C-terminus: Translation initiation factor IF-3 (183 aa).

This sequence belongs to the IF-3 family. As to quaternary structure, monomer.

It localises to the cytoplasm. IF-3 binds to the 30S ribosomal subunit and shifts the equilibrium between 70S ribosomes and their 50S and 30S subunits in favor of the free subunits, thus enhancing the availability of 30S subunits on which protein synthesis initiation begins. In Pseudomonas aeruginosa (strain ATCC 15692 / DSM 22644 / CIP 104116 / JCM 14847 / LMG 12228 / 1C / PRS 101 / PAO1), this protein is Translation initiation factor IF-3.